The chain runs to 829 residues: Periplasmic nitrate reductase (829 aa).

A signal peptide (tat-type signal) is located at residues 1-31 (MKLSRRDFMKANAVAAAAAAAGLTIPTVARA). The region spanning 40–96 (ITWDKAPCRFCGTGCGVLVGTQNGRIVASQGDPDAPVNRGLNCIKGYFLPKIMYGKD) is the 4Fe-4S Mo/W bis-MGD-type domain. Cys47, Cys50, Cys54, and Cys82 together coordinate [4Fe-4S] cluster. Mo-bis(molybdopterin guanine dinucleotide) is bound by residues Lys84, Gln151, Asn176, Cys180, 213–220 (WGSNMAEM), 263–265 (QSD), Met373, Gln377, Asn483, 509–510 (SD), Lys532, Asp559, and 719–728 (TGRVLEHWHT). Phe795 is a binding site for substrate. Asn803 and Lys820 together coordinate Mo-bis(molybdopterin guanine dinucleotide).

This sequence belongs to the prokaryotic molybdopterin-containing oxidoreductase family. NasA/NapA/NarB subfamily. As to quaternary structure, component of the periplasmic nitrate reductase NapAB complex composed of NapA and NapB. The cofactor is [4Fe-4S] cluster. Mo-bis(molybdopterin guanine dinucleotide) serves as cofactor. In terms of processing, predicted to be exported by the Tat system. The position of the signal peptide cleavage has not been experimentally proven.

It localises to the periplasm. The catalysed reaction is 2 Fe(II)-[cytochrome] + nitrate + 2 H(+) = 2 Fe(III)-[cytochrome] + nitrite + H2O. Functionally, catalytic subunit of the periplasmic nitrate reductase complex NapAB. Receives electrons from NapB and catalyzes the reduction of nitrate to nitrite. The chain is Periplasmic nitrate reductase from Edwardsiella ictaluri (strain 93-146).